The primary structure comprises 174 residues: Shikimate kinase (174 aa).

Residue 15–20 (GTGKST) coordinates ATP. Serine 19 lines the Mg(2+) pocket. Substrate is bound by residues aspartate 37, arginine 61, and glycine 82. Arginine 120 lines the ATP pocket. Arginine 138 is a binding site for substrate.

The protein belongs to the shikimate kinase family. As to quaternary structure, monomer. Requires Mg(2+) as cofactor.

Its subcellular location is the cytoplasm. It catalyses the reaction shikimate + ATP = 3-phosphoshikimate + ADP + H(+). It participates in metabolic intermediate biosynthesis; chorismate biosynthesis; chorismate from D-erythrose 4-phosphate and phosphoenolpyruvate: step 5/7. In terms of biological role, catalyzes the specific phosphorylation of the 3-hydroxyl group of shikimic acid using ATP as a cosubstrate. This is Shikimate kinase from Staphylococcus aureus (strain NCTC 8325 / PS 47).